We begin with the raw amino-acid sequence, 376 residues long: NAD(P)H-quinone oxidoreductase subunit 1, chloroplastic (376 aa).

A run of 9 helical transmembrane segments spans residues 27–47 (LISIFLPIVLLLVISVLGVLV), 65–85 (PEYAGSLGIMQAIVDGVKLLI), 97–117 (WLFSIGPVLVVTPVILSYLVV), 130–150 (LGIFFWIVISSITPLGLLIAG), 166–186 (AAQSISYEIPLTLCVLSISLL), 251–271 (GIKFGIFYVASYLNLLVSSLF), 272–292 (AVVLYLGGWNFPIPTTLIFFI), 310–330 (LIIPIIHISITLAKTYLFIFF), and 353–373 (FLLPMAVGNLLLTASFQLTLF).

Belongs to the complex I subunit 1 family. As to quaternary structure, NDH is composed of at least 16 different subunits, 5 of which are encoded in the nucleus.

It localises to the plastid. The protein resides in the chloroplast thylakoid membrane. It carries out the reaction a plastoquinone + NADH + (n+1) H(+)(in) = a plastoquinol + NAD(+) + n H(+)(out). The enzyme catalyses a plastoquinone + NADPH + (n+1) H(+)(in) = a plastoquinol + NADP(+) + n H(+)(out). Its function is as follows. NDH shuttles electrons from NAD(P)H:plastoquinone, via FMN and iron-sulfur (Fe-S) centers, to quinones in the photosynthetic chain and possibly in a chloroplast respiratory chain. The immediate electron acceptor for the enzyme in this species is believed to be plastoquinone. Couples the redox reaction to proton translocation, and thus conserves the redox energy in a proton gradient. This Chara vulgaris (Common stonewort) protein is NAD(P)H-quinone oxidoreductase subunit 1, chloroplastic.